The sequence spans 333 residues: Phosphate acyltransferase (333 aa).

Belongs to the PlsX family. Homodimer. Probably interacts with PlsY.

It is found in the cytoplasm. It carries out the reaction a fatty acyl-[ACP] + phosphate = an acyl phosphate + holo-[ACP]. The protein operates within lipid metabolism; phospholipid metabolism. Catalyzes the reversible formation of acyl-phosphate (acyl-PO(4)) from acyl-[acyl-carrier-protein] (acyl-ACP). This enzyme utilizes acyl-ACP as fatty acyl donor, but not acyl-CoA. The chain is Phosphate acyltransferase from Pelagibacter ubique (strain HTCC1062).